We begin with the raw amino-acid sequence, 384 residues long: uncharacterized protein (384 aa).

12 helical membrane-spanning segments follow: residues 22 to 42 (LAFF…PFAK), 52 to 72 (LGLL…LTGV), 81 to 101 (AVIL…VLMN), 106 to 126 (MAIA…AMNI), 143 to 163 (FHGL…ALLW), 164 to 184 (LGLN…ILLL), 202 to 222 (LFVF…VMFL), 240 to 260 (GMSP…MTLG), 276 to 296 (VLLG…SIDS), 299 to 319 (AAII…PILF), 327 to 347 (VMPA…GILA), and 352 to 372 (IGFI…ALLL).

This sequence belongs to the major facilitator superfamily.

The protein localises to the membrane. This is an uncharacterized protein from Yersinia pestis.